Here is a 314-residue protein sequence, read N- to C-terminus: Versiconal hemiacetal acetate esterase (314 aa).

Residues 85 to 87 carry the Involved in the stabilization of the negatively charged intermediate by the formation of the oxyanion hole motif; that stretch reads HGG. Residues S154, D255, and H285 contribute to the active site.

This sequence belongs to the 'GDXG' lipolytic enzyme family.

It carries out the reaction (2S,3S)-versiconal hemiacetal acetate + H2O = (2S-3S)-versiconal hemiacetal + acetate + H(+). It catalyses the reaction (3S)-versiconol acetate + H2O = (S)-versiconol + acetate + H(+). It participates in mycotoxin biosynthesis; aflatoxin biosynthesis. Its function is as follows. Versiconal hemiacetal acetate esterase; part of the gene cluster that mediates the biosynthesis of aflatoxins, a group of polyketide-derived furanocoumarins, and part of the most toxic and carcinogenic compounds among the known mycotoxins. The four major aflatoxins produced by A.parasiticus are aflatoxin B1 (AFB1), aflatoxin B2 (AFB2), aflatoxin G1 (AFG1) and aflatoxin G2 (AFG2). Within the aflatoxin pathway, the versiconal hemiacetal acetate esterase aflJ converts versiconal hemiacetal acetate (VHA) into versiconal (VAL). The biosynthesis of aflatoxins begins with the norsolorinic acid synthase aflC that combines a hexanoyl starter unit produced by the fatty acid synthase aflA/aflB and 7 malonyl-CoA extender units to synthesize the precursor NOR. The second step is the conversion of NOR to averantin and requires the norsolorinic acid ketoreductase aflD, which catalyzes the dehydration of norsolorinic acid to form (1'S)-averantin. The norsolorinic acid reductases aflE and aflF may also play a role in the conversion of NOR to AVN. The cytochrome P450 monooxygenase aflG then catalyzes the hydroxylation of AVN to 5'hydroxyaverantin (HAVN). The next step is performed by the 5'-hydroxyaverantin dehydrogenase aflH that transforms HAVN to 5'-oxoaverantin (OAVN) which is further converted to averufin (AVF) by aflK that plays a dual role in the pathway, as a 5'-oxoaverantin cyclase that mediates conversion of 5'-oxoaverantin, as well as a versicolorin B synthase in a later step in the pathway. The averufin oxidase aflI catalyzes the conversion of AVF to versiconal hemiacetal acetate (VHA). VHA is then the substrate for the versiconal hemiacetal acetate esterase aflJ to yield versiconal (VAL). Versicolorin B synthase aflK then converts VAL to versicolorin B (VERB) by closing the bisfuran ring of aflatoxin which is required for DNA-binding, thus giving to aflatoxin its activity as a mutagen. Then, the activity of the versicolorin B desaturase aflL leads to versicolorin A (VERA). A branch point starts from VERB since it can also be converted to dihydrodemethylsterigmatocystin (DMDHST), probably also by aflL, VERA being a precursor for aflatoxins B1 and G1, and DMDHST for aflatoxins B2 and G2. Next, the versicolorin reductase aflM and the cytochrome P450 monooxygenase aflN are involved in conversion of VERA to demethylsterigmatocystin (DMST). AflX and aflY seem also involved in this step, through probable aflX-mediated epoxide ring-opening step following versicolorin A oxidation and aflY-mediated Baeyer-Villiger oxidation required for the formation of the xanthone ring. The methyltransferase aflO then leads to the modification of DMST to sterigmatocystin (ST), and of DMDHST to dihydrosterigmatocystin (DHST). Both ST and DHST are then substrates of the O-methyltransferase aflP to yield O-methylsterigmatocystin (OMST) and dihydro-O-methylsterigmatocystin (DHOMST), respectively. Finally OMST is converted to aflatoxins B1 and G1, and DHOMST to aflatoxins B2 and G2, via the action of several enzymes including O-methylsterigmatocystin oxidoreductase aflQ, the cytochrome P450 monooxygenase aflU, but also the NADH-dependent flavin oxidoreductase nadA which is specifically required for the synthesis of AFG1. In Aspergillus parasiticus (strain ATCC 56775 / NRRL 5862 / SRRC 143 / SU-1), this protein is Versiconal hemiacetal acetate esterase.